We begin with the raw amino-acid sequence, 486 residues long: Maintenance of mitochondrial morphology protein 1 (486 aa).

At 1–20 (MNFQQSAIPPFSFLLSFTQG) the chain is on the lumenal side. A helical transmembrane segment spans residues 21-41 (FLLGQLSVVLLIGAFIKFFIF). The Cytoplasmic portion of the chain corresponds to 42-486 (GEAPPPPSRG…GSLPDGAVGN (445 aa)). Disordered stretches follow at residues 70-96 (TNEA…SSST), 271-320 (TPPL…SPKS), and 387-486 (RTGV…AVGN). Residues 83–96 (STSNVLRPVPSSST) are compositionally biased toward polar residues. The SMP-LTD domain occupies 128–379 (QPESLDWFNV…EPRVQVVGLP (252 aa)). The span at 271 to 282 (TPPLHTPSPSPA) shows a compositional bias: pro residues. Positions 292 to 306 (QSQPENNSSNPNQQS) are enriched in low complexity. Composition is skewed to polar residues over residues 398 to 407 (TGSNAASRSA) and 440 to 450 (DSVSRSSSFNV). Residues 460-474 (MTREDSRGAISDDFH) show a composition bias toward basic and acidic residues.

It belongs to the MMM1 family. As to quaternary structure, homodimer. Component of the ER-mitochondria encounter structure (ERMES) or MDM complex, composed of mmm1, mdm10, mdm12 and mdm34. A mmm1 homodimer associates with one molecule of mdm12 on each side in a pairwise head-to-tail manner, and the SMP-LTD domains of mmm1 and mdm12 generate a continuous hydrophobic tunnel for phospholipid trafficking.

The protein localises to the endoplasmic reticulum membrane. In terms of biological role, component of the ERMES/MDM complex, which serves as a molecular tether to connect the endoplasmic reticulum (ER) and mitochondria. Components of this complex are involved in the control of mitochondrial shape and protein biogenesis, and function in nonvesicular lipid trafficking between the ER and mitochondria. The mdm12-mmm1 subcomplex functions in the major beta-barrel assembly pathway that is responsible for biogenesis of all outer membrane beta-barrel proteins, and acts in a late step after the SAM complex. The mdm10-mdm12-mmm1 subcomplex further acts in the TOM40-specific pathway after the action of the mdm12-mmm1 complex. Essential for establishing and maintaining the structure of mitochondria and maintenance of mtDNA nucleoids. In Aspergillus terreus (strain NIH 2624 / FGSC A1156), this protein is Maintenance of mitochondrial morphology protein 1.